A 219-amino-acid polypeptide reads, in one-letter code: Adenylate kinase (219 aa).

12 to 17 lines the ATP pocket; it reads GAGKGT. The segment at 32–61 is NMP; that stretch reads STGDMLRAAVKAGTPIGLQAKAVMDAGELV. Residues threonine 33, arginine 38, 59–61, 87–90, and glutamine 94 contribute to the AMP site; these read ELV and GYPR. The tract at residues 128–165 is LID; it reads GRFSCARCGEGYHDRYKLPKVADICDVCGSKEFKRRPD. Arginine 129 is a binding site for ATP. Zn(2+) contacts are provided by cysteine 132, cysteine 135, cysteine 152, and cysteine 155. The AMP site is built by arginine 162 and arginine 174. Alanine 202 is a binding site for ATP.

This sequence belongs to the adenylate kinase family. Monomer.

It is found in the cytoplasm. The catalysed reaction is AMP + ATP = 2 ADP. The protein operates within purine metabolism; AMP biosynthesis via salvage pathway; AMP from ADP: step 1/1. Catalyzes the reversible transfer of the terminal phosphate group between ATP and AMP. Plays an important role in cellular energy homeostasis and in adenine nucleotide metabolism. This chain is Adenylate kinase, found in Sphingopyxis alaskensis (strain DSM 13593 / LMG 18877 / RB2256) (Sphingomonas alaskensis).